The sequence spans 361 residues: tRNA 2-selenouridine synthase (361 aa).

Positions 14-137 (LIADTPIIDV…LRQTAIQATI (124 aa)) constitute a Rhodanese domain. C97 acts as the S-selanylcysteine intermediate in catalysis.

The protein belongs to the SelU family. In terms of assembly, monomer.

It carries out the reaction 5-methylaminomethyl-2-thiouridine(34) in tRNA + selenophosphate + (2E)-geranyl diphosphate + H2O + H(+) = 5-methylaminomethyl-2-selenouridine(34) in tRNA + (2E)-thiogeraniol + phosphate + diphosphate. The catalysed reaction is 5-methylaminomethyl-2-thiouridine(34) in tRNA + (2E)-geranyl diphosphate = 5-methylaminomethyl-S-(2E)-geranyl-thiouridine(34) in tRNA + diphosphate. It catalyses the reaction 5-methylaminomethyl-S-(2E)-geranyl-thiouridine(34) in tRNA + selenophosphate + H(+) = 5-methylaminomethyl-2-(Se-phospho)selenouridine(34) in tRNA + (2E)-thiogeraniol. The enzyme catalyses 5-methylaminomethyl-2-(Se-phospho)selenouridine(34) in tRNA + H2O = 5-methylaminomethyl-2-selenouridine(34) in tRNA + phosphate. In terms of biological role, involved in the post-transcriptional modification of the uridine at the wobble position (U34) of tRNA(Lys), tRNA(Glu) and tRNA(Gln). Catalyzes the conversion of 2-thiouridine (S2U-RNA) to 2-selenouridine (Se2U-RNA). Acts in a two-step process involving geranylation of 2-thiouridine (S2U) to S-geranyl-2-thiouridine (geS2U) and subsequent selenation of the latter derivative to 2-selenouridine (Se2U) in the tRNA chain. The chain is tRNA 2-selenouridine synthase from Escherichia coli O6:H1 (strain CFT073 / ATCC 700928 / UPEC).